The chain runs to 152 residues: Aspartate carbamoyltransferase regulatory chain (152 aa).

Cys-108, Cys-113, Cys-137, and Cys-140 together coordinate Zn(2+).

It belongs to the PyrI family. In terms of assembly, contains catalytic and regulatory chains. Zn(2+) serves as cofactor.

Functionally, involved in allosteric regulation of aspartate carbamoyltransferase. This chain is Aspartate carbamoyltransferase regulatory chain, found in Neisseria gonorrhoeae (strain ATCC 700825 / FA 1090).